Consider the following 120-residue polypeptide: Large ribosomal subunit protein uL14 (120 aa).

The protein belongs to the universal ribosomal protein uL14 family. As to quaternary structure, part of the 50S ribosomal subunit. Forms a cluster with proteins L3 and L19. In the 70S ribosome, L14 and L19 interact and together make contacts with the 16S rRNA in bridges B5 and B8.

Functionally, binds to 23S rRNA. Forms part of two intersubunit bridges in the 70S ribosome. The polypeptide is Large ribosomal subunit protein uL14 (Dictyoglomus thermophilum (strain ATCC 35947 / DSM 3960 / H-6-12)).